The sequence spans 172 residues: UBA-like domain-containing protein 2 (172 aa).

The span at 118-130 (PPNQQPVWLPPSS) shows a compositional bias: pro residues. The interval 118–172 (PPNQQPVWLPPSSPTGHHTLHHHHHHMHPPPSWPPVSQPANGPQTPVISALHGQR) is disordered. Basic residues predominate over residues 135-145 (HTLHHHHHHMH).

This sequence belongs to the UBALD family.

The protein is UBA-like domain-containing protein 2 (ubald2) of Danio rerio (Zebrafish).